The chain runs to 153 residues: Nucleoside diphosphate kinase 3 (153 aa).

ATP is bound by residues Lys11, Phe59, Arg87, Thr93, Arg104, and Asn114. Catalysis depends on His117, which acts as the Pros-phosphohistidine intermediate.

It belongs to the NDK family. As to quaternary structure, homohexamer. It depends on Mg(2+) as a cofactor.

It localises to the plastid. Its subcellular location is the chloroplast thylakoid lumen. It carries out the reaction a 2'-deoxyribonucleoside 5'-diphosphate + ATP = a 2'-deoxyribonucleoside 5'-triphosphate + ADP. The catalysed reaction is a ribonucleoside 5'-diphosphate + ATP = a ribonucleoside 5'-triphosphate + ADP. In terms of biological role, major role in the synthesis of nucleoside triphosphates other than ATP. The ATP gamma phosphate is transferred to the NDP beta phosphate via a ping-pong mechanism, using a phosphorylated active-site intermediate. Shows the highest specificity towards GDP. The sequence is that of Nucleoside diphosphate kinase 3 from Spinacia oleracea (Spinach).